We begin with the raw amino-acid sequence, 317 residues long: Tricarboxylate transport protein B, mitochondrial (317 aa).

A propeptide spans 1–20 (MSGSPKFVSPFHRPHCLSAA) (removed in mature form). 3 Solcar repeats span residues 29–117 (THPG…LSNQ), 128–214 (TRGL…LRNW), and 224–309 (INPV…VVKV). 4 helical membrane passes run 35-55 (ILAG…TEYV), 130-150 (GLIC…CPME), 223-243 (SINP…SVFG), and 294-314 (MDVA…NKVW).

Belongs to the mitochondrial carrier (TC 2.A.29) family. Post-translationally, possesses a short cleavable presequence, which, however, is found to be dispensable both for targeting to mitochondria and insertion into the inner membrane. However, the presequence is required to keep SLC25A1 in a soluble state and thus in an import-competent state. Mature SLC25A1 lacking the presequence is prone to aggregation.

The protein resides in the mitochondrion inner membrane. The enzyme catalyses (S)-malate(in) + citrate(out) = (S)-malate(out) + citrate(in). The catalysed reaction is D-threo-isocitrate(in) + citrate(out) = D-threo-isocitrate(out) + citrate(in). It carries out the reaction citrate(out) + succinate(in) = citrate(in) + succinate(out). It catalyses the reaction cis-aconitate(in) + citrate(out) = cis-aconitate(out) + citrate(in). The enzyme catalyses trans-aconitate(in) + citrate(out) = trans-aconitate(out) + citrate(in). The catalysed reaction is phosphoenolpyruvate(in) + citrate(out) = phosphoenolpyruvate(out) + citrate(in). It carries out the reaction maleate(in) + citrate(out) = maleate(out) + citrate(in). Its function is as follows. Mitochondrial electroneutral antiporter that exports citrate from the mitochondria into the cytosol in exchange for malate. Also able to mediate the exchange of citrate for isocitrate, phosphoenolpyruvate, cis-aconitate and to a lesser extent trans-aconitate, maleate and succinate. In the cytoplasm, citrate plays important roles in fatty acid and sterol synthesis, regulation of glycolysis, protein acetylation, and other physiopathological processes. The polypeptide is Tricarboxylate transport protein B, mitochondrial (Danio rerio (Zebrafish)).